The sequence spans 104 residues: MAKFDPRNLPDLVRRPILTEKATIMMEQDKYTFEVTPKATKPQIRAAIEDLFQVKVVKVNTALPPRRKKRVGKFIGFKPQYKKAIVTIAPGDVEKIRQVLFPEV.

Belongs to the universal ribosomal protein uL23 family. As to quaternary structure, part of the 50S ribosomal subunit. Contacts protein L29, and trigger factor when it is bound to the ribosome.

Its function is as follows. One of the early assembly proteins it binds 23S rRNA. One of the proteins that surrounds the polypeptide exit tunnel on the outside of the ribosome. Forms the main docking site for trigger factor binding to the ribosome. The sequence is that of Large ribosomal subunit protein uL23 from Trichormus variabilis (strain ATCC 29413 / PCC 7937) (Anabaena variabilis).